Reading from the N-terminus, the 178-residue chain is Large ribosomal subunit protein uL6 (178 aa).

This sequence belongs to the universal ribosomal protein uL6 family. In terms of assembly, part of the 50S ribosomal subunit.

In terms of biological role, this protein binds to the 23S rRNA, and is important in its secondary structure. It is located near the subunit interface in the base of the L7/L12 stalk, and near the tRNA binding site of the peptidyltransferase center. In Levilactobacillus brevis (strain ATCC 367 / BCRC 12310 / CIP 105137 / JCM 1170 / LMG 11437 / NCIMB 947 / NCTC 947) (Lactobacillus brevis), this protein is Large ribosomal subunit protein uL6.